A 399-amino-acid chain; its full sequence is Zinc finger HIT domain-containing protein 2 (399 aa).

At M1 the chain carries N-acetylmethionine. Residues C7, C10, C22, C25, C30, C34, H38, and C41 each contribute to the Zn(2+) site. Residues 7-41 (CGFCPAGEALPARYTCPRCNAPYCSLRCYRAHGAC) form an HIT-type zinc finger. 2 disordered regions span residues 70–97 (RLRE…GLSG) and 152–175 (AEPE…AEPF). Over residues 86 to 96 (LGPGARPGGLS) the composition is skewed to gly residues. T161 bears the Phosphothreonine mark.

Interacts (via HIT-type zinc finger) with RUVBL2 in the presence of ATP or ADP; shows a stronger interaction in the presence of ADP. Low expression in most tissues; highly expressed in testis; particularly in seminiferous tubules.

Functionally, may act as a bridging factor mediating the interaction between the R2TP/Prefoldin-like (R2TP/PFDL) complex and U5 small nuclear ribonucleoprotein (U5 snRNP). Required for the interaction of R2TP complex subunit RPAP3 and prefoldin-like subunit URI1 with U5 snRNP proteins EFTUD2 and PRPF8. May play a role in regulating the composition of the U5 snRNP complex. The protein is Zinc finger HIT domain-containing protein 2 (Znhit2) of Mus musculus (Mouse).